A 312-amino-acid polypeptide reads, in one-letter code: Transcription factor Ouib (312 aa).

A ZAD domain is found at 4–79 (IVCRVCGRQK…IKTQTKWLTI (76 aa)). Zn(2+)-binding residues include Cys6, Cys9, Cys52, and Cys55. 5 C2H2-type zinc fingers span residues 167–189 (YICELCGTHATSKPTFQRHMRKH), 195–217 (FGCKDCDARFLSAGELRAHHRVH), 223–245 (FACRFCEKRYVSYMGRLIHERTH), 251–273 (YVCEECGKKFTTAYVLKNHMVIH), and 279–303 (FRCDICDRSFQRKAHLVTHTRSMMH).

Expressed predominantly in the prothoracic gland during embryonic and larval development.

The protein localises to the nucleus. Functionally, transcription factor required for ecdysteroid production in the prothoracic gland by activating transcription of the ecdysteroid biosynthesis gene spok. Binds to the 5'-AGCTTTATTATTTAG-3' DNA sequence in the spok enhancer region. This Drosophila melanogaster (Fruit fly) protein is Transcription factor Ouib.